We begin with the raw amino-acid sequence, 267 residues long: Undecaprenyl-diphosphatase (267 aa).

The next 8 membrane-spanning stretches (helical) occupy residues 1–21 (MSYF…FLPI), 39–59 (QGLA…VIYF), 83–103 (AKLA…GLLM), 111–131 (LRSA…LWWV), 144–164 (AGWK…IPGT), 189–209 (FLMS…KLVT), 218–238 (TLLT…HFFL), and 246–266 (MTPF…FLMM).

This sequence belongs to the UppP family.

The protein resides in the cell inner membrane. The enzyme catalyses di-trans,octa-cis-undecaprenyl diphosphate + H2O = di-trans,octa-cis-undecaprenyl phosphate + phosphate + H(+). In terms of biological role, catalyzes the dephosphorylation of undecaprenyl diphosphate (UPP). Confers resistance to bacitracin. This is Undecaprenyl-diphosphatase from Vibrio atlanticus (strain LGP32) (Vibrio splendidus (strain Mel32)).